Consider the following 440-residue polypeptide: Dynein axonemal assembly factor 11 (440 aa).

LRR repeat units follow at residues 20–43, 44–65, 66–89, and 90–110; these read IFSL…HKWC, RDLK…VGRL, KKLE…GCES, and LQKL…ETLK. The LRRCT domain maps to 128–146; sequence YQGYRQYVVATVPQLQSLD. The segment covering 178 to 192 has biased composition (basic and acidic residues); that stretch reads EEREKQKSNANEHPE. Disordered stretches follow at residues 178–267 and 363–440; these read EERE…RTLI and PKKR…PPLM. A compositionally biased stretch (polar residues) spans 193–211; sequence INQSLSESQNGTQQYPESS. Residues 236–259 are compositionally biased toward basic and acidic residues; the sequence is SRLEAHRHLEEKRRANEKEKEKPK. The region spanning 276–374 is the CS domain; it reads VNEPKLDFSL…KRTIRPTSVT (99 aa). The span at 369–378 shows a compositional bias: polar residues; the sequence is RPTSVTSNQN. Basic and acidic residues-rich tracts occupy residues 379–392 and 420–431; these read NKKD…RELL and GLEERPVSKDFV.

This sequence belongs to the tilB family. In terms of assembly, interacts with dvl2. Interacts with kur. As to expression, expressed in kinocilia of hair cells.

The protein resides in the cytoplasm. The protein localises to the dynein axonemal particle. Its subcellular location is the cell projection. It is found in the cilium. Functionally, plays a crucial role in regulating cilia motility in pronephric tubules, cloaca and neural tube. Required for establishing left-right asymmetry of the body plan; controls cell fate and convergent extension (CE) movements during gastrulation, respectively, via the Wnt and the planar cell polarity (PCP) signaling pathways. Required for the proper development of renal glomeruli and tubules. The chain is Dynein axonemal assembly factor 11 (dnaaf11) from Danio rerio (Zebrafish).